We begin with the raw amino-acid sequence, 138 residues long: NADH-quinone oxidoreductase subunit A (138 aa).

Transmembrane regions (helical) follow at residues 8 to 28 (FGAV…GYLT), 63 to 83 (FYVV…LFPW), and 93 to 113 (FALI…AYAW).

This sequence belongs to the complex I subunit 3 family. In terms of assembly, NDH-1 is composed of 14 different subunits. Subunits NuoA, H, J, K, L, M, N constitute the membrane sector of the complex.

The protein resides in the cell inner membrane. It catalyses the reaction a quinone + NADH + 5 H(+)(in) = a quinol + NAD(+) + 4 H(+)(out). Functionally, NDH-1 shuttles electrons from NADH, via FMN and iron-sulfur (Fe-S) centers, to quinones in the respiratory chain. The immediate electron acceptor for the enzyme in this species is believed to be a menaquinone. Couples the redox reaction to proton translocation (for every two electrons transferred, four hydrogen ions are translocated across the cytoplasmic membrane), and thus conserves the redox energy in a proton gradient. The chain is NADH-quinone oxidoreductase subunit A from Prosthecochloris aestuarii (strain DSM 271 / SK 413).